Consider the following 1187-residue polypeptide: Disease resistance protein TAO1 (1187 aa).

In terms of domain architecture, TIR spans 38–202 (WLHPVFLSFR…KISKDVSDVL (165 aa)). Residue glutamate 113 is part of the active site. An NB-ARC domain is found at 217–478 (EAHTTEITSL…FFRRERIETL (262 aa)). 14 LRR repeats span residues 498 to 522 (DKSL…GLDI), 611 to 633 (SRKL…KFNP), 635 to 658 (FLVK…PIRN), 660 to 679 (KWMD…FSTA), 680 to 703 (TNLQ…IGNA), 704 to 727 (TNLL…IGNL), 728 to 750 (TNLK…SFGN), 752 to 775 (TSLK…IGNI), 799 to 823 (NTNL…MLNL), 824 to 849 (TRLE…VINL), 870 to 894 (ATNL…IWNI), 895 to 918 (TNLQ…VENA), 920 to 942 (NLQS…IWRI), and 953 to 974 (CSSL…LILD).

The catalysed reaction is NAD(+) + H2O = ADP-D-ribose + nicotinamide + H(+). In terms of biological role, TIR-NB-LRR receptor-like protein that contributes to disease resistance induced by the Pseudomonas syringae type III effector AvrB. Acts additively with RPM1 to generate a full disease resistance response to P.syringae expressing this type III effector. The protein is Disease resistance protein TAO1 of Arabidopsis thaliana (Mouse-ear cress).